Here is a 1659-residue protein sequence, read N- to C-terminus: Intersectin-2 (1659 aa).

The region spanning 22 to 110 is the EH 1 domain; that stretch reads ERTKHDKQFD…PIMKQPPMFS (89 aa). An EF-hand 1 domain is found at 54–89; it reads LPAPVLAEIWALSDLNKDGKMDQQEFSIAMKLIKLK. Ca(2+)-binding residues include D67, N69, D71, K73, and E78. Residues S110, S211, and S231 each carry the phosphoserine modification. Residues 220–231 are compositionally biased toward low complexity; that stretch reads STSSTASLSGNS. Positions 220 to 242 are disordered; it reads STSSTASLSGNSPKTGTSEWAVP. Positions 245-334 constitute an EH 2 domain; it reads SRLKYRQKFN…PELVPPSFRG (90 aa). The 36-residue stretch at 278–313 folds into the EF-hand 2 domain; that stretch reads LSQTQLATIWTLADIDGDGQLKAEEFILAMHLTDMA. A disordered region spans residues 335–382; it reads GKQVDSVNGTLPSYQKTQEEEPQKKLPVTFEDKRKANYERGNMELEKR. Positions 339 to 350 are enriched in polar residues; that stretch reads DSVNGTLPSYQK. Over residues 351-382 the composition is skewed to basic and acidic residues; sequence TQEEEPQKKLPVTFEDKRKANYERGNMELEKR. A coiled-coil region spans residues 365–717; that stretch reads EDKRKANYER…KAEAKQSETA (353 aa). Y554 carries the post-translational modification Phosphotyrosine. At T574 the chain carries Phosphothreonine. Positions 689–713 are enriched in basic and acidic residues; it reads KQKRLQEEKSQDKTQEEERKAEAKQ. The segment at 689–715 is disordered; sequence KQKRLQEEKSQDKTQEEERKAEAKQSE. Residues 718–779 form the SH3 1 domain; it reads SALVNYRALY…PCNYVEKVLS (62 aa). At T836 the chain carries Phosphothreonine. 2 positions are modified to phosphoserine: S838 and S843. The region spanning 852 to 910 is the SH3 2 domain; that stretch reads VENLKAQALCSWTAKKENHLNFSKHDVITVLEQQENWWFGEVHGGRGWFPKSYVKLIPG. Y922 is subject to Phosphotyrosine. 3 consecutive SH3 domains span residues 942–1000, 1014–1078, and 1088–1147; these read PVGE…PKDQ, KKPE…LLGP, and HAVC…MTTD. The DH domain occupies 1170-1357; the sequence is KRQGYIHELI…EELCSQVNEG (188 aa). The 111-residue stretch at 1396–1506 folds into the PH domain; the sequence is KLLHSGKLYK…WVQKIKGASE (111 aa). The 117-residue stretch at 1514–1630 folds into the C2 domain; it reads KKREKAYQAR…RTEQESKGPT (117 aa). Positions 1602, 1605, and 1608 each coordinate Ca(2+).

As to quaternary structure, belongs to a complex that may contain multimers of ITSN1, ITSN2 and EPS15, and different partners according to the step in the endocytic process. Interacts with ADAM15. Interacts with FASLG. Interacts with ANKRD54. Interacts with FCHO2. Ca(2+) serves as cofactor. As to expression, widely expressed in adult tissues.

The protein resides in the cytoplasm. Its function is as follows. Adapter protein that may provide indirect link between the endocytic membrane traffic and the actin assembly machinery. May regulate the formation of clathrin-coated vesicles (CCPs). Seems to be involved in CCPs maturation including invagination or budding. Involved in endocytosis of integrin beta-1 (ITGB1) and transferrin receptor (TFR). Plays a role in dendrite formation by melanocytes. This Mus musculus (Mouse) protein is Intersectin-2 (Itsn2).